A 315-amino-acid chain; its full sequence is MKMSKLSDLEGHEDRVWNVAWNPSGTILASCGGDKSIRLWGLEGGSWVCKSVLLDGHQRTVRGVSWSNCGRYLASSSFDGTTCIWRRQDDTFESCATLEGHENEVKACGWSPSGRFLATCSRDKTVWIWEVGEDEEFECASVQTCHSQDVKKVLWHPDRDELASASYDNTIRFFCEEVDDWQCYCTLDKHASTVWGLSFGPGPEPQLASCAADGSVYVWGTKGDRRSWELCGTLERHPRPVYDVSWCRTRGFLATACGDNAVRVFVKDGGDCSWRLGCTLTQAHSQDVNSVSWSPSGGLLASAGDDGYVRLWQID.

7 WD repeats span residues 11 to 50, 56 to 95, 100 to 139, 145 to 188, 189 to 229, 236 to 275, and 283 to 315; these read GHED…WVCK, GHQR…FESC, GHEN…EFEC, CHSQ…CTLD, KHAS…RSWE, RHPR…CSWR, and AHSQ…WQID.

Belongs to the WD repeat CIA1 family.

Its function is as follows. Essential component of the cytosolic iron-sulfur (Fe/S) protein assembly machinery. Required for the maturation of extramitochondrial Fe/S proteins. The sequence is that of Probable cytosolic iron-sulfur protein assembly protein CIAO1 homolog from Ixodes scapularis (Black-legged tick).